The chain runs to 605 residues: Translation factor GUF1 homolog, chloroplastic (605 aa).

Residues 7-189 (RRIRNFSIIA…RIVQVVPPPR (183 aa)) enclose the tr-type G domain. GTP is bound by residues 16-23 (AHIDHGKS), 82-86 (DTPGH), and 136-139 (NKID).

This sequence belongs to the TRAFAC class translation factor GTPase superfamily. Classic translation factor GTPase family. LepA subfamily.

The protein resides in the plastid. It is found in the chloroplast. The catalysed reaction is GTP + H2O = GDP + phosphate + H(+). Promotes chloroplast protein synthesis. May act as a fidelity factor of the translation reaction, by catalyzing a one-codon backward translocation of tRNAs on improperly translocated ribosomes. This chain is Translation factor GUF1 homolog, chloroplastic, found in Ostreococcus lucimarinus (strain CCE9901).